Consider the following 190-residue polypeptide: UPF0200 protein TSIB_0920 (190 aa).

7-14 (GMPGSGKG) is an ATP binding site.

Belongs to the UPF0200 family.

The sequence is that of UPF0200 protein TSIB_0920 from Thermococcus sibiricus (strain DSM 12597 / MM 739).